Reading from the N-terminus, the 224-residue chain is Large ribosomal subunit protein uL4 (224 aa).

Residues 53–74 (RNRSEVSHSTKKPFKQKGTGNA) are disordered.

Belongs to the universal ribosomal protein uL4 family. In terms of assembly, part of the 50S ribosomal subunit.

One of the primary rRNA binding proteins, this protein initially binds near the 5'-end of the 23S rRNA. It is important during the early stages of 50S assembly. It makes multiple contacts with different domains of the 23S rRNA in the assembled 50S subunit and ribosome. Functionally, forms part of the polypeptide exit tunnel. The polypeptide is Large ribosomal subunit protein uL4 (Chlamydia pneumoniae (Chlamydophila pneumoniae)).